Reading from the N-terminus, the 282-residue chain is Bifunctional protein FolD (282 aa).

NADP(+) is bound by residues 165 to 167, S190, and I231; that span reads NRS.

The protein belongs to the tetrahydrofolate dehydrogenase/cyclohydrolase family. In terms of assembly, homodimer.

It carries out the reaction (6R)-5,10-methylene-5,6,7,8-tetrahydrofolate + NADP(+) = (6R)-5,10-methenyltetrahydrofolate + NADPH. The enzyme catalyses (6R)-5,10-methenyltetrahydrofolate + H2O = (6R)-10-formyltetrahydrofolate + H(+). The protein operates within one-carbon metabolism; tetrahydrofolate interconversion. Its function is as follows. Catalyzes the oxidation of 5,10-methylenetetrahydrofolate to 5,10-methenyltetrahydrofolate and then the hydrolysis of 5,10-methenyltetrahydrofolate to 10-formyltetrahydrofolate. The chain is Bifunctional protein FolD from Clostridium botulinum (strain Okra / Type B1).